Here is a 410-residue protein sequence, read N- to C-terminus: Acetate kinase (410 aa).

A Mg(2+)-binding site is contributed by N7. K14 lines the ATP pocket. R88 serves as a coordination point for substrate. D145 acts as the Proton donor/acceptor in catalysis. ATP contacts are provided by residues 203 to 207 (HAGNG), 278 to 280 (DTR), and 326 to 330 (GIGEN). Position 379 (E379) interacts with Mg(2+).

Belongs to the acetokinase family. As to quaternary structure, homodimer. It depends on Mg(2+) as a cofactor. Mn(2+) is required as a cofactor.

It localises to the cytoplasm. The catalysed reaction is acetate + ATP = acetyl phosphate + ADP. It functions in the pathway metabolic intermediate biosynthesis; acetyl-CoA biosynthesis; acetyl-CoA from acetate: step 1/2. In terms of biological role, catalyzes the formation of acetyl phosphate from acetate and ATP. Can also catalyze the reverse reaction. In Aster yellows witches'-broom phytoplasma (strain AYWB), this protein is Acetate kinase.